The following is a 190-amino-acid chain: Potassium-transporting ATPase KdpC subunit (190 aa).

A helical transmembrane segment spans residues 10–30 (VLLLVLTGLTGFAYPLLSTAI).

This sequence belongs to the KdpC family. The system is composed of three essential subunits: KdpA, KdpB and KdpC.

Its subcellular location is the cell inner membrane. Its function is as follows. Part of the high-affinity ATP-driven potassium transport (or Kdp) system, which catalyzes the hydrolysis of ATP coupled with the electrogenic transport of potassium into the cytoplasm. This subunit acts as a catalytic chaperone that increases the ATP-binding affinity of the ATP-hydrolyzing subunit KdpB by the formation of a transient KdpB/KdpC/ATP ternary complex. This is Potassium-transporting ATPase KdpC subunit from Sorangium cellulosum (strain So ce56) (Polyangium cellulosum (strain So ce56)).